A 484-amino-acid chain; its full sequence is RNA polymerase sigma-54 factor 1 (484 aa).

The segment at residues 355-374 is a DNA-binding region (H-T-H motif); sequence NLKAVAEAIQMHESTVSRVT. Positions 444–452 match the RPON box motif; the sequence is ARRTVAKYR. Residues 464–484 form a disordered region; the sequence is RRDNMWSTMNSRASGGTGLDK. The span at 468–477 shows a compositional bias: polar residues; sequence MWSTMNSRAS.

Belongs to the sigma-54 factor family.

Sigma factors are initiation factors that promote the attachment of RNA polymerase to specific initiation sites and are then released. This sigma factor is responsible for the expression of the nitrogen fixation genes. The polypeptide is RNA polymerase sigma-54 factor 1 (rpoN1) (Bradyrhizobium diazoefficiens (strain JCM 10833 / BCRC 13528 / IAM 13628 / NBRC 14792 / USDA 110)).